The following is a 437-amino-acid chain: Alpha-galactosidase 3 (437 aa).

The signal sequence occupies residues 1-30 (MVIMKKMKDSVLFLVVGLFSLSVLVSQSIA). 2 disulfides stabilise this stretch: cysteine 85–cysteine 117 and cysteine 165–cysteine 195. N-linked (GlcNAc...) asparagine glycosylation is present at asparagine 88. Residues 115–116 (DD) and lysine 191 each bind substrate. Aspartate 193 acts as the Nucleophile in catalysis. The N-linked (GlcNAc...) asparagine glycan is linked to asparagine 214. Substrate is bound by residues 226–230 (EWGVD), arginine 244, and aspartate 248. Aspartate 248 (proton donor) is an active-site residue. Asparagine 250, asparagine 315, and asparagine 408 each carry an N-linked (GlcNAc...) asparagine glycan.

Belongs to the glycosyl hydrolase 27 family. In terms of assembly, homodimer.

Its subcellular location is the secreted. The protein resides in the cell wall. It localises to the extracellular space. It is found in the apoplast. The protein localises to the vacuole. The catalysed reaction is Hydrolysis of terminal, non-reducing alpha-D-galactose residues in alpha-D-galactosides, including galactose oligosaccharides, galactomannans and galactolipids.. In terms of biological role, may regulate leaf (and possibly other organ) development by functioning in cell wall loosening and cell wall expansion. This chain is Alpha-galactosidase 3, found in Arabidopsis thaliana (Mouse-ear cress).